A 301-amino-acid polypeptide reads, in one-letter code: Tyrosine recombinase XerD (301 aa).

A Core-binding (CB) domain is found at 6–89 (PLHQQLIEQF…ALKVFFHFLK (84 aa)). Residues 108–293 (RLPSILSTEE…ASESIIEKFH (186 aa)) form the Tyr recombinase domain. Catalysis depends on residues arginine 152, lysine 174, histidine 245, arginine 248, and histidine 271. Tyrosine 280 serves as the catalytic O-(3'-phospho-DNA)-tyrosine intermediate.

It belongs to the 'phage' integrase family. XerD subfamily. As to quaternary structure, forms a cyclic heterotetrameric complex composed of two molecules of XerC and two molecules of XerD.

It localises to the cytoplasm. Site-specific tyrosine recombinase, which acts by catalyzing the cutting and rejoining of the recombining DNA molecules. The XerC-XerD complex is essential to convert dimers of the bacterial chromosome into monomers to permit their segregation at cell division. It also contributes to the segregational stability of plasmids. The sequence is that of Tyrosine recombinase XerD from Chlamydia muridarum (strain MoPn / Nigg).